The sequence spans 569 residues: Proline--tRNA ligase (569 aa).

It belongs to the class-II aminoacyl-tRNA synthetase family. ProS type 1 subfamily. In terms of assembly, homodimer.

It is found in the cytoplasm. The enzyme catalyses tRNA(Pro) + L-proline + ATP = L-prolyl-tRNA(Pro) + AMP + diphosphate. Catalyzes the attachment of proline to tRNA(Pro) in a two-step reaction: proline is first activated by ATP to form Pro-AMP and then transferred to the acceptor end of tRNA(Pro). As ProRS can inadvertently accommodate and process non-cognate amino acids such as alanine and cysteine, to avoid such errors it has two additional distinct editing activities against alanine. One activity is designated as 'pretransfer' editing and involves the tRNA(Pro)-independent hydrolysis of activated Ala-AMP. The other activity is designated 'posttransfer' editing and involves deacylation of mischarged Ala-tRNA(Pro). The misacylated Cys-tRNA(Pro) is not edited by ProRS. The sequence is that of Proline--tRNA ligase from Halalkalibacterium halodurans (strain ATCC BAA-125 / DSM 18197 / FERM 7344 / JCM 9153 / C-125) (Bacillus halodurans).